We begin with the raw amino-acid sequence, 134 residues long: Transcription antitermination protein NusB (134 aa).

This sequence belongs to the NusB family.

Functionally, involved in transcription antitermination. Required for transcription of ribosomal RNA (rRNA) genes. Binds specifically to the boxA antiterminator sequence of the ribosomal RNA (rrn) operons. In Shewanella woodyi (strain ATCC 51908 / MS32), this protein is Transcription antitermination protein NusB.